A 909-amino-acid chain; its full sequence is GTPase activating protein homolog 4 (909 aa).

The F-BAR domain occupies 1 to 257 (MASLIGSAKL…PTPDFQFESC (257 aa)). The 192-residue stretch at 322-513 (IPIEEIMFKQ…LIIEGYLKLS (192 aa)) folds into the Rho-GAP domain. Positions 529–909 (IPSFSNNNNN…QRVPPPPSQS (381 aa)) are disordered. 2 stretches are compositionally biased toward low complexity: residues 533-562 (SNNN…ITTN) and 571-602 (SSTT…TPQQ). A compositionally biased stretch (pro residues) spans 609–625 (SYQPPQPPPTMAPPPLF). Residues 651 to 674 (QYTQSSSNLPPIQLGVTNSPSKPQ) are compositionally biased toward polar residues. Residues 672–809 (KPQLSDKQKE…QQLQQQSNGS (138 aa)) are a coiled coil. Residues 675 to 716 (LSDKQKEKEKEKEKEKEKEKEREKEKEKEKEKEKEKEKEKEK) show a composition bias toward basic and acidic residues. Residues 723–741 (SSSTSPNSSSLSISNFLSS) show a composition bias toward low complexity. Over residues 742–765 (NKDKDKEKDKEKEKEKEKEKDKEI) the composition is skewed to basic and acidic residues. A compositionally biased stretch (polar residues) spans 767–785 (ATNSTPEKPVSNRMSLIFS). Low complexity-rich tracts occupy residues 786–828 (QQLQ…MSPS) and 843–892 (SGTS…ELKS).

It localises to the cytoplasm. The protein resides in the contractile vacuole. Functionally, rho GTPase-activating protein involved in the signal transduction pathway. This Dictyostelium discoideum (Social amoeba) protein is GTPase activating protein homolog 4 (mgp4).